The sequence spans 427 residues: MTNKEAFSEAKKYIPGGVNSPVRAFGSVGGEPVMIDHARGAYLYDVEGKKYLDFIQSWGPLIFGHCDKDIEEAIISAVKQGVSYGAPSPKETALAKLICDEFKQIDKIRFVSSGTEATMSAIRVARGYAKKDGLIKFEGCYHGHSDALLIKAGSGATTYGNASSGGVPQDVVKNTFLAIYNDIESVKAIFENNKDKIGVVIIEPIAGNMGLVPADKKFLRELRELCDKFGAVLILDEVMSGFRASRLGSYPFHEVDADLVTFGKVIGGGMNVAAFGGKAKIMDCLSPEGAVYQAGTLSGNPVAMSAGIAAISKINSDVNLYVRLEKLALKLMDGFKEAAKSAGITIQTEVRGSMFGYFFTDHVVKNYDDALKSDTKLFAKFHQAMLKRGIYLAPSQFETGFICDAMSEADIDLAVNAAKEAFLEIKA.

At Lys264 the chain carries N6-(pyridoxal phosphate)lysine.

This sequence belongs to the class-III pyridoxal-phosphate-dependent aminotransferase family. HemL subfamily. As to quaternary structure, homodimer. Pyridoxal 5'-phosphate is required as a cofactor.

It is found in the cytoplasm. It catalyses the reaction (S)-4-amino-5-oxopentanoate = 5-aminolevulinate. It functions in the pathway porphyrin-containing compound metabolism; protoporphyrin-IX biosynthesis; 5-aminolevulinate from L-glutamyl-tRNA(Glu): step 2/2. This chain is Glutamate-1-semialdehyde 2,1-aminomutase, found in Campylobacter concisus (strain 13826).